The chain runs to 160 residues: SsrA-binding protein (160 aa).

Belongs to the SmpB family.

Its subcellular location is the cytoplasm. Required for rescue of stalled ribosomes mediated by trans-translation. Binds to transfer-messenger RNA (tmRNA), required for stable association of tmRNA with ribosomes. tmRNA and SmpB together mimic tRNA shape, replacing the anticodon stem-loop with SmpB. tmRNA is encoded by the ssrA gene; the 2 termini fold to resemble tRNA(Ala) and it encodes a 'tag peptide', a short internal open reading frame. During trans-translation Ala-aminoacylated tmRNA acts like a tRNA, entering the A-site of stalled ribosomes, displacing the stalled mRNA. The ribosome then switches to translate the ORF on the tmRNA; the nascent peptide is terminated with the 'tag peptide' encoded by the tmRNA and targeted for degradation. The ribosome is freed to recommence translation, which seems to be the essential function of trans-translation. The chain is SsrA-binding protein from Mannheimia succiniciproducens (strain KCTC 0769BP / MBEL55E).